The primary structure comprises 645 residues: Sentrin-specific protease 1 (645 aa).

Residues methionine 1–methionine 200 form an interaction with CCAR2 region. Phosphoserine occurs at positions 57, 117, and 157. Positions glutamine 92 to serine 117 are disordered. Residues arginine 99–serine 117 show a composition bias toward low complexity. A Nuclear localization signal motif is present at residues proline 171 to arginine 177. A disordered region spans residues lysine 285–serine 313. Protease regions lie at residues leucine 451–cysteine 614 and leucine 451–isoleucine 615. Active-site residues include histidine 534 and aspartate 551. The Nuclear localization signal signature appears at lysine 575–lysine 578. Residue cysteine 604 is the Nucleophile of the active site. The short motif at proline 629–methionine 635 is the Nuclear localization signal element. A Nuclear export signal motif is present at residues valine 636 to leucine 645.

This sequence belongs to the peptidase C48 family. In terms of assembly, interacts with RBM33; promoting ALKBH5 desumoylation and subsequent activation.

It localises to the nucleus. Its subcellular location is the cytoplasm. In terms of biological role, protease that catalyzes two essential functions in the SUMO pathway. The first is the hydrolysis of an alpha-linked peptide bond at the C-terminal end of the small ubiquitin-like modifier (SUMO) propeptides, SUMO1, SUMO2 and SUMO3 leading to the mature form of the proteins. The second is the deconjugation of SUMO1, SUMO2 and SUMO3 from targeted proteins, by cleaving an epsilon-linked peptide bond between the C-terminal glycine of the mature SUMO and the lysine epsilon-amino group of the target protein. Deconjugates SUMO1 from HIPK2. Deconjugates SUMO1 from HDAC1 and BHLHE40/DEC1, which decreases its transcriptional repression activity. Deconjugates SUMO1 from CLOCK, which decreases its transcriptional activation activity. Deconjugates SUMO2 from MTA1. Inhibits N(6)-methyladenosine (m6A) RNA methylation by mediating SUMO1 deconjugation from METTL3 and ALKBH5: METTL3 inhibits the m6A RNA methyltransferase activity, while ALKBH5 desumoylation promotes m6A demethylation. Desumoylates CCAR2 which decreases its interaction with SIRT1. Deconjugates SUMO1 from GPS2. The polypeptide is Sentrin-specific protease 1 (SENP1) (Pongo abelii (Sumatran orangutan)).